The chain runs to 283 residues: Pantothenate synthetase (283 aa).

30 to 37 (MGNLHSGH) contributes to the ATP binding site. The active-site Proton donor is H37. A (R)-pantoate-binding site is contributed by Q61. Q61 contributes to the beta-alanine binding site. 149–152 (GQKD) contributes to the ATP binding site. A (R)-pantoate-binding site is contributed by Q155. Residues V178 and 186-189 (LSSR) contribute to the ATP site.

This sequence belongs to the pantothenate synthetase family. Homodimer.

It localises to the cytoplasm. The catalysed reaction is (R)-pantoate + beta-alanine + ATP = (R)-pantothenate + AMP + diphosphate + H(+). Its pathway is cofactor biosynthesis; (R)-pantothenate biosynthesis; (R)-pantothenate from (R)-pantoate and beta-alanine: step 1/1. Functionally, catalyzes the condensation of pantoate with beta-alanine in an ATP-dependent reaction via a pantoyl-adenylate intermediate. In Pseudomonas fluorescens (strain SBW25), this protein is Pantothenate synthetase.